The sequence spans 198 residues: MPKVGMQPIRRQQLIEATMAAVNEVGMHEASIAQIAKRAGVSNGIISHYFRDKNGLLEATMRYLIRHLGEAVKQHLAALSVNDPRARLRAIAEGNFDDSQINSAAMKTWLAFWASSMHSPQLYRLQQVNNRRLYSNLCAEFKRCLPREQAQLAAKGMAGLIDGLWLRSALSGEHFNRQEALLIIHNYIEQQLNIKYKC.

One can recognise an HTH tetR-type domain in the interval 8 to 68 (PIRRQQLIEA…ATMRYLIRHL (61 aa)). Positions 31 to 50 (SIAQIAKRAGVSNGIISHYF) form a DNA-binding region, H-T-H motif.

The protein operates within amine and polyamine biosynthesis; betaine biosynthesis via choline pathway [regulation]. Repressor involved in the biosynthesis of the osmoprotectant glycine betaine. It represses transcription of the choline transporter BetT and the genes of BetAB involved in the synthesis of glycine betaine. The polypeptide is HTH-type transcriptional regulator BetI (Yersinia pseudotuberculosis serotype O:1b (strain IP 31758)).